A 74-amino-acid polypeptide reads, in one-letter code: Serine rich endogenous peptide 23 (74 aa).

Positions 1–25 (MNKVVVYVLALSILLFFGLPNTTLA) are cleaved as a signal peptide. An SCOOP motif motif is present at residues 52–66 (KIAVGGSDSVRAHSK). Residues 58–60 (SDS) carry the SxS motif essential for MIK2 binding motif.

This sequence belongs to the serine rich endogenous peptide (SCOOP) phytocytokine family. In terms of assembly, interacts with MIK2 (via extracellular leucine-rich repeat domain); this interaction triggers the formation of complex between MIK2 and the BAK1/SERK3 and SERK4 coreceptors, and subsequent BAK1 activation by phosphorylation. In terms of tissue distribution, mostly expressed in roots, and, to a lower extent, in seedlings shoots.

Its subcellular location is the cell membrane. It is found in the secreted. The protein localises to the extracellular space. The protein resides in the apoplast. Its function is as follows. Brassicaceae-specific phytocytokine (plant endogenous peptide released into the apoplast) perceived by MIK2 in a BAK1/SERK3 and SERK4 coreceptors-dependent manner, that modulates various physiological and antimicrobial processes including growth prevention and reactive oxygen species (ROS) response regulation. Inhibits root growth. The sequence is that of Serine rich endogenous peptide 23 from Arabidopsis thaliana (Mouse-ear cress).